The following is a 215-amino-acid chain: 3-demethoxyubiquinol 3-hydroxylase (215 aa).

Residues glutamate 64, glutamate 94, histidine 97, glutamate 146, glutamate 178, and histidine 181 each contribute to the Fe cation site.

It belongs to the COQ7 family. The cofactor is Fe cation.

The protein localises to the cell membrane. It carries out the reaction a 5-methoxy-2-methyl-3-(all-trans-polyprenyl)benzene-1,4-diol + AH2 + O2 = a 3-demethylubiquinol + A + H2O. Its pathway is cofactor biosynthesis; ubiquinone biosynthesis. Functionally, catalyzes the hydroxylation of 2-nonaprenyl-3-methyl-6-methoxy-1,4-benzoquinol during ubiquinone biosynthesis. This Pseudomonas savastanoi pv. phaseolicola (strain 1448A / Race 6) (Pseudomonas syringae pv. phaseolicola (strain 1448A / Race 6)) protein is 3-demethoxyubiquinol 3-hydroxylase.